The sequence spans 1039 residues: FHIP family protein GG24907 (1039 aa).

Serine 498 and serine 805 each carry phosphoserine. 3 disordered regions span residues 831-877 (ATPT…SASS), 904-945 (GISQ…SNSS), and 957-984 (SNTT…SEPA). Polar residues-rich tracts occupy residues 855–877 (TSMF…SASS) and 904–924 (GISQ…TQPQ). The segment covering 925 to 945 (AGASRTGATATSAAASGSNSS) has biased composition (low complexity). The segment covering 957-966 (SNTTTHSAST) has biased composition (polar residues).

It belongs to the FHIP family.

This chain is FHIP family protein GG24907, found in Drosophila erecta (Fruit fly).